A 555-amino-acid chain; its full sequence is MKIIILSVILAYCVTDNCQDACPVEAEPPSSTPTVPTSCEAKEGECIDTRCATCKRDILSDGLCENKPGKTCCRMCQYVIECRVEAAGYFRTFYGKRFNFQEPGKYVLARGTKGGDWSVTLTMENLDGQKGAVLTKTTLEVAGDVIDITQATADPITVNGGADPVIANPFTIGEVTIAVVEIPGFNITVIEFFKLIVIDILGGRSVRIAPDTANKGLISGICGNLEMNDADDFTTDADQLAIQPNINKEFDGCPFYGNPSDIEYCKGLMEPYRAVCRNNINFYYYTLSCAFAYCMGGEERAKHVLFDYVETCAAPETRGTCVLSGHTFYDTFDKARYQFQGPCKEILMAADCYWNTWDVKVSHRDVESYTEVEKVTIRKQSTVVDLIVDGKQVKVGGVDVSIPYSSENTSIYWQDGDILTTAILPEALVVKFNFKQLLVVHIRDPFDGKTCGICGNYNQDSTDDFFDAEGACALTPNPPGCTEEQKPEAERLCNNLFDSSIDEKCNVCYKPDRIARCMYEYCLRGQQGFCDHAWEFKKECYIKHGDTLEVPPECQ.

The N-terminal stretch at 1–11 (MKIIILSVILA) is a signal peptide. VWFD domains lie at 80-266 (IECR…EYCK) and 319-494 (GTCV…RLCN). 4 disulfide bridges follow: Cys-82–Cys-222, Cys-321–Cys-454, Cys-343–Cys-493, and Cys-352–Cys-451. Residues Asn-186 and Asn-408 are each glycosylated (N-linked (GlcNAc...) asparagine).

Post-translationally, the cysteine residues presumably exist in intramolecular disulfide bridges. In terms of processing, the N-terminus is blocked.

It catalyses the reaction Cypridina luciferin + O2 = oxidized Cypridina luciferin + hnu + CO2. The chain is Luciferin 2-monooxygenase from Vargula hilgendorfii (Sea firefly).